The following is a 384-amino-acid chain: MAAVWRWFVPERPSFYDRGLLALTFSLMGIGLMMVASASIKEGPGGDMFYFTKRHLIFLFVCLGIGVGTLYLPLERWREWSGRLLVGALGLLFAVLAVGRTVNGAKRWIGFGFFNIQPAELAKLALIVFIASYLVRRSDEVRGNIAGFVKPLAVVFLLAIMLLAQPDLGSVVVLFVCTFGLLFIGGAKLVQFIAIIVAGLSALAGLIIYEPYRLRRVTSFLDPWADPFGSGYQLTQSLMAFGRGGFFGQGLGNSVQKLSYLPEAHTDFVFAILGEELGYFGVLVVLFLQLLLAMKALQIGRTALLRSKFFEGYMACGIGIWFSFQTVVNVGAAAGMLPTKGLTLPLVSYGGSSLIAITMAVAILLRIDFERRLDTSHVIQREAA.

Residues 1–19 are Cytoplasmic-facing; the sequence is MAAVWRWFVPERPSFYDRG. Residues 20–40 traverse the membrane as a helical segment; that stretch reads LLALTFSLMGIGLMMVASASI. Residues 41–54 lie on the Periplasmic side of the membrane; it reads KEGPGGDMFYFTKR. Residues 55 to 75 form a helical membrane-spanning segment; the sequence is HLIFLFVCLGIGVGTLYLPLE. The Cytoplasmic portion of the chain corresponds to 76–83; that stretch reads RWREWSGR. Residues 84–104 form a helical membrane-spanning segment; that stretch reads LLVGALGLLFAVLAVGRTVNG. Topologically, residues 105 to 110 are periplasmic; the sequence is AKRWIG. Residues 111 to 131 form a helical membrane-spanning segment; it reads FGFFNIQPAELAKLALIVFIA. Residues 132 to 143 lie on the Cytoplasmic side of the membrane; that stretch reads SYLVRRSDEVRG. A helical transmembrane segment spans residues 144-164; it reads NIAGFVKPLAVVFLLAIMLLA. At 165-166 the chain is on the periplasmic side; that stretch reads QP. Residues 167 to 187 form a helical membrane-spanning segment; the sequence is DLGSVVVLFVCTFGLLFIGGA. K188 is a topological domain (cytoplasmic). The chain crosses the membrane as a helical span at residues 189 to 209; the sequence is LVQFIAIIVAGLSALAGLIIY. Residues 210–267 lie on the Periplasmic side of the membrane; the sequence is EPYRLRRVTSFLDPWADPFGSGYQLTQSLMAFGRGGFFGQGLGNSVQKLSYLPEAHTD. Residues 268 to 288 traverse the membrane as a helical segment; sequence FVFAILGEELGYFGVLVVLFL. Residues 289 to 316 are Cytoplasmic-facing; sequence QLLLAMKALQIGRTALLRSKFFEGYMAC. Residues 317-337 form a helical membrane-spanning segment; sequence GIGIWFSFQTVVNVGAAAGML. Residues 338 to 343 are Periplasmic-facing; sequence PTKGLT. The chain crosses the membrane as a helical span at residues 344–364; the sequence is LPLVSYGGSSLIAITMAVAIL. Residues 365-384 are Cytoplasmic-facing; it reads LRIDFERRLDTSHVIQREAA.

This sequence belongs to the SEDS family. FtsW subfamily.

It is found in the cell inner membrane. The enzyme catalyses [GlcNAc-(1-&gt;4)-Mur2Ac(oyl-L-Ala-gamma-D-Glu-L-Lys-D-Ala-D-Ala)](n)-di-trans,octa-cis-undecaprenyl diphosphate + beta-D-GlcNAc-(1-&gt;4)-Mur2Ac(oyl-L-Ala-gamma-D-Glu-L-Lys-D-Ala-D-Ala)-di-trans,octa-cis-undecaprenyl diphosphate = [GlcNAc-(1-&gt;4)-Mur2Ac(oyl-L-Ala-gamma-D-Glu-L-Lys-D-Ala-D-Ala)](n+1)-di-trans,octa-cis-undecaprenyl diphosphate + di-trans,octa-cis-undecaprenyl diphosphate + H(+). Its pathway is cell wall biogenesis; peptidoglycan biosynthesis. In terms of biological role, peptidoglycan polymerase that is essential for cell division. The polypeptide is Probable peptidoglycan glycosyltransferase FtsW (Tolumonas auensis (strain DSM 9187 / NBRC 110442 / TA 4)).